Consider the following 78-residue polypeptide: Protein SlyX homolog (78 aa).

This sequence belongs to the SlyX family.

The sequence is that of Protein SlyX homolog from Xanthomonas axonopodis pv. citri (strain 306).